Consider the following 341-residue polypeptide: Protein RecA, plasmid (341 aa).

80 to 87 (GAESSGKT) lines the ATP pocket.

The protein belongs to the RecA family.

The protein localises to the cytoplasm. Functionally, can catalyze the hydrolysis of ATP in the presence of single-stranded DNA, the ATP-dependent uptake of single-stranded DNA by duplex DNA, and the ATP-dependent hybridization of homologous single-stranded DNAs. It interacts with LexA causing its activation and leading to its autocatalytic cleavage. The polypeptide is Protein RecA, plasmid (Lactococcus lactis subsp. lactis (Streptococcus lactis)).